Here is a 603-residue protein sequence, read N- to C-terminus: Sulfite reductase [NADPH] flavoprotein alpha-component (603 aa).

Residues 64–202 form the Flavodoxin-like domain; sequence ITLISASQTG…QAETWRAAIV (139 aa). Residues 70-75, 117-120, and 153-162 contribute to the FMN site; these read SQTGNA, STQG, and LGDSSYEHFA. The 217-residue stretch at 236 to 452 folds into the FAD-binding FR-type domain; sequence EAPLTAHLAL…IEHNDNFRLP (217 aa). FAD contacts are provided by residues Thr326, Leu360, 390 to 393, 408 to 410, Tyr414, and 423 to 426; these read RLYS, TVG, and GGAS. Residues 523–524, 529–533, and Asp565 each bind NADP(+); these read SR and KIYVQ. Residue Tyr603 participates in FAD binding.

The protein belongs to the NADPH-dependent sulphite reductase flavoprotein subunit CysJ family. This sequence in the N-terminal section; belongs to the flavodoxin family. In the C-terminal section; belongs to the flavoprotein pyridine nucleotide cytochrome reductase family. As to quaternary structure, alpha(8)-beta(8). The alpha component is a flavoprotein, the beta component is a hemoprotein. FAD is required as a cofactor. It depends on FMN as a cofactor.

It carries out the reaction hydrogen sulfide + 3 NADP(+) + 3 H2O = sulfite + 3 NADPH + 4 H(+). Its pathway is sulfur metabolism; hydrogen sulfide biosynthesis; hydrogen sulfide from sulfite (NADPH route): step 1/1. Functionally, component of the sulfite reductase complex that catalyzes the 6-electron reduction of sulfite to sulfide. This is one of several activities required for the biosynthesis of L-cysteine from sulfate. The flavoprotein component catalyzes the electron flow from NADPH -&gt; FAD -&gt; FMN to the hemoprotein component. The protein is Sulfite reductase [NADPH] flavoprotein alpha-component of Sodalis glossinidius (strain morsitans).